Consider the following 338-residue polypeptide: Solute carrier family 35 member G4 (338 aa).

A disordered region spans residues 1–29; sequence MAGSHPYFNLPDSTHPSPPSTPPSLHWHQ. Helical transmembrane passes span 37–57, 160–180, 190–210, 221–241, 250–270, 281–301, and 305–325; these read TNGLLVALLGGGLPAGFVGPL, CGLLGSILGLIIIVGPGLWTL, GLGYVQAFLGGLALSLGLLVY, TVAFLSGLVGLLGSVPGLFVL, LLSWSCVGAVGILTLVSFTCV, LVCAVLHSEVVMALILQYFML, and VAPSDIMGAGVVLGSIAIITA. The region spanning 49-174 is the EamA 1 domain; it reads LPAGFVGPLS…SILGLIIIVG (126 aa). The 54-residue stretch at 272-325 folds into the EamA 2 domain; the sequence is YAVTKAHPALVCAVLHSEVVMALILQYFMLHETVAPSDIMGAGVVLGSIAIITA.

It belongs to the SLC35G solute transporter family.

It localises to the membrane. This chain is Solute carrier family 35 member G4 (SLC35G4), found in Homo sapiens (Human).